The following is a 558-amino-acid chain: Serine/threonine-protein phosphatase 2B catalytic subunit (558 aa).

Aspartate 128, histidine 130, and aspartate 156 together coordinate Fe cation. Zn(2+) contacts are provided by aspartate 156 and asparagine 188. Histidine 189 acts as the Proton donor in catalysis. Histidine 237 and histidine 319 together coordinate Zn(2+). Disordered regions lie at residues leucine 415–proline 439 and alanine 534–serine 558. Residues alanine 420–alanine 435 are compositionally biased toward low complexity. Residues alanine 534–leucine 548 show a composition bias toward basic and acidic residues. Polar residues predominate over residues glutamine 549–serine 558.

This sequence belongs to the PPP phosphatase family. PP-2B subfamily. As to quaternary structure, composed of two components (A and B), the A component is the catalytic subunit and the B component confers calcium sensitivity. Requires Fe(3+) as cofactor. Zn(2+) serves as cofactor.

It carries out the reaction O-phospho-L-seryl-[protein] + H2O = L-seryl-[protein] + phosphate. It catalyses the reaction O-phospho-L-threonyl-[protein] + H2O = L-threonyl-[protein] + phosphate. Functionally, calcium-dependent, calmodulin-stimulated protein phosphatase. This subunit may have a role in the calmodulin activation of calcineurin. In Neurospora crassa (strain ATCC 24698 / 74-OR23-1A / CBS 708.71 / DSM 1257 / FGSC 987), this protein is Serine/threonine-protein phosphatase 2B catalytic subunit (cna-1).